We begin with the raw amino-acid sequence, 284 residues long: Polyamine aminopropyltransferase (284 aa).

One can recognise a PABS domain in the interval Lys-6–His-242. An S-methyl-5'-thioadenosine-binding site is contributed by Gln-36. Residues His-67 and Asp-91 each coordinate spermidine. S-methyl-5'-thioadenosine-binding positions include Glu-111 and Asp-142–Gly-143. Catalysis depends on Asp-161, which acts as the Proton acceptor. Asp-161 to Asp-164 is a spermidine binding site.

Belongs to the spermidine/spermine synthase family. In terms of assembly, homodimer or homotetramer.

It is found in the cytoplasm. It carries out the reaction S-adenosyl 3-(methylsulfanyl)propylamine + putrescine = S-methyl-5'-thioadenosine + spermidine + H(+). The protein operates within amine and polyamine biosynthesis; spermidine biosynthesis; spermidine from putrescine: step 1/1. Catalyzes the irreversible transfer of a propylamine group from the amino donor S-adenosylmethioninamine (decarboxy-AdoMet) to putrescine (1,4-diaminobutane) to yield spermidine. This is Polyamine aminopropyltransferase from Nitrosococcus oceani (strain ATCC 19707 / BCRC 17464 / JCM 30415 / NCIMB 11848 / C-107).